Reading from the N-terminus, the 138-residue chain is Large ribosomal subunit protein uL14m (138 aa).

It belongs to the universal ribosomal protein uL14 family. As to quaternary structure, component of the mitochondrial large ribosomal subunit (mt-LSU). Mature yeast 74S mitochondrial ribosomes consist of a small (37S) and a large (54S) subunit. The 37S small subunit contains a 15S ribosomal RNA (15S mt-rRNA) and 34 different proteins. The 54S large subunit contains a 21S rRNA (21S mt-rRNA) and 46 different proteins.

Its subcellular location is the mitochondrion. Component of the mitochondrial ribosome (mitoribosome), a dedicated translation machinery responsible for the synthesis of mitochondrial genome-encoded proteins, including at least some of the essential transmembrane subunits of the mitochondrial respiratory chain. The mitoribosomes are attached to the mitochondrial inner membrane and translation products are cotranslationally integrated into the membrane. The polypeptide is Large ribosomal subunit protein uL14m (MRPL38) (Saccharomyces cerevisiae (strain ATCC 204508 / S288c) (Baker's yeast)).